Here is a 155-residue protein sequence, read N- to C-terminus: Ribonuclease H (155 aa).

The RNase H type-1 domain maps to 4–145; the sequence is QQKVVEIYTD…ADALARKAIT (142 aa). Residues D13, E51, D73, and D137 each coordinate Mg(2+).

It belongs to the RNase H family. Monomer. The cofactor is Mg(2+).

It is found in the cytoplasm. It catalyses the reaction Endonucleolytic cleavage to 5'-phosphomonoester.. Its function is as follows. Endonuclease that specifically degrades the RNA of RNA-DNA hybrids. The protein is Ribonuclease H of Bartonella quintana (strain Toulouse) (Rochalimaea quintana).